The sequence spans 453 residues: Proton extrusion protein PxcA (453 aa).

Positions 147 to 189 (SQDKETQTLDNKSTNQTNSKLSNNNKISSGQNDSRLESASQKT) are disordered. Polar residues predominate over residues 154–163 (TLDNKSTNQT). Positions 164–175 (NSKLSNNNKISS) are enriched in low complexity. The segment covering 176–189 (GQNDSRLESASQKT) has biased composition (polar residues). The next 4 helical transmembrane spans lie at 235–255 (FILL…TFLL), 330–350 (SIGN…VIVS), 377–397 (LIIL…WEVI), and 413–433 (FNFL…KYWI).

It belongs to the CemA family.

It is found in the cell inner membrane. Required for H(+) efflux immediately after light irradiation to form a rapid H(+) concentration gradient across the thylakoid membranes. Together with PxcL, contributes to transient H(+) uptake following dark to light transition. The chain is Proton extrusion protein PxcA from Crocosphaera subtropica (strain ATCC 51142 / BH68) (Cyanothece sp. (strain ATCC 51142)).